The following is a 110-amino-acid chain: Insulin (110 aa).

Residues 1–23 (MALWLQAFTLLVLLVLSSPGAQS) form the signal peptide. 3 cysteine pairs are disulfide-bonded: C30/C96, C42/C109, and C95/C100. A propeptide spans 56–87 (DVDPLLGFLSPKSAQENEADEYPYKDQGDLKV) (c peptide).

It belongs to the insulin family. In terms of assembly, heterodimer of a B chain and an A chain linked by two disulfide bonds.

Its subcellular location is the secreted. Its function is as follows. Insulin decreases blood glucose concentration. It increases cell permeability to monosaccharides, amino acids and fatty acids. It accelerates glycolysis, the pentose phosphate cycle, and glycogen synthesis in liver. This Pantodon buchholzi (Freshwater butterflyfish) protein is Insulin (ins).